The sequence spans 299 residues: 4-diphosphocytidyl-2-C-methyl-D-erythritol kinase (299 aa).

Residue Lys19 is part of the active site. 110-120 (PVASGIGGGSA) is a binding site for ATP. The active site involves Asp152.

The protein belongs to the GHMP kinase family. IspE subfamily.

It catalyses the reaction 4-CDP-2-C-methyl-D-erythritol + ATP = 4-CDP-2-C-methyl-D-erythritol 2-phosphate + ADP + H(+). Its pathway is isoprenoid biosynthesis; isopentenyl diphosphate biosynthesis via DXP pathway; isopentenyl diphosphate from 1-deoxy-D-xylulose 5-phosphate: step 3/6. Its function is as follows. Catalyzes the phosphorylation of the position 2 hydroxy group of 4-diphosphocytidyl-2C-methyl-D-erythritol. This chain is 4-diphosphocytidyl-2-C-methyl-D-erythritol kinase, found in Agrobacterium fabrum (strain C58 / ATCC 33970) (Agrobacterium tumefaciens (strain C58)).